We begin with the raw amino-acid sequence, 246 residues long: 4-hydroxy-tetrahydrodipicolinate reductase (246 aa).

NAD(+) is bound at residue 7–12 (GCSGRM). Arg34 serves as a coordination point for NADP(+). Residues 76–78 (ATT) and 102–105 (CPNT) contribute to the NAD(+) site. Residue His135 is the Proton donor/acceptor of the active site. Residue His136 participates in (S)-2,3,4,5-tetrahydrodipicolinate binding. Residue Lys139 is the Proton donor of the active site. 145–146 (GT) lines the (S)-2,3,4,5-tetrahydrodipicolinate pocket.

It belongs to the DapB family.

It localises to the cytoplasm. It catalyses the reaction (S)-2,3,4,5-tetrahydrodipicolinate + NAD(+) + H2O = (2S,4S)-4-hydroxy-2,3,4,5-tetrahydrodipicolinate + NADH + H(+). The enzyme catalyses (S)-2,3,4,5-tetrahydrodipicolinate + NADP(+) + H2O = (2S,4S)-4-hydroxy-2,3,4,5-tetrahydrodipicolinate + NADPH + H(+). The protein operates within amino-acid biosynthesis; L-lysine biosynthesis via DAP pathway; (S)-tetrahydrodipicolinate from L-aspartate: step 4/4. Catalyzes the conversion of 4-hydroxy-tetrahydrodipicolinate (HTPA) to tetrahydrodipicolinate. The polypeptide is 4-hydroxy-tetrahydrodipicolinate reductase (Chlamydia abortus (strain DSM 27085 / S26/3) (Chlamydophila abortus)).